Consider the following 103-residue polypeptide: MPGVIFWTIFIIQFMIWVFLSTTKIGRVIAFIWGTMPFLALYLKYTGYFPTIFENPDVNLFANLLSNFVVEWSYLVVQTTVPSWIGLLFGLKLSGNNDTPQII.

3 helical membrane passes run 1–21 (MPGV…VFLS), 29–49 (IAFI…TGYF), and 69–89 (VVEW…GLLF).

The protein localises to the cell membrane. This is an uncharacterized protein from Methanocaldococcus jannaschii (strain ATCC 43067 / DSM 2661 / JAL-1 / JCM 10045 / NBRC 100440) (Methanococcus jannaschii).